A 225-amino-acid polypeptide reads, in one-letter code: Cytidylate kinase (225 aa).

11-19 (GPAGAGKST) lines the ATP pocket.

This sequence belongs to the cytidylate kinase family. Type 1 subfamily.

It localises to the cytoplasm. The catalysed reaction is CMP + ATP = CDP + ADP. It catalyses the reaction dCMP + ATP = dCDP + ADP. The sequence is that of Cytidylate kinase from Shouchella clausii (strain KSM-K16) (Alkalihalobacillus clausii).